The following is a 544-amino-acid chain: Secreted aspartic protease 9 (544 aa).

The N-terminal stretch at 1-17 (MRLNSVALLSLVATALA) is a signal peptide. The tract at residues 31–50 (GESKDDLSPEDDSNPRFVKR) is disordered. Positions 65–479 (YMATLKIGSN…DLDDYEVSLA (415 aa)) constitute a Peptidase A1 domain. 83-85 (DTG) contacts pepstatin A. A disulfide bond links Cys98 and Cys195. The active site involves Thr167. Asn212, Asn240, and Asn252 each carry an N-linked (GlcNAc...) asparagine glycan. Asp371 is a catalytic residue. Residue 371–375 (DTGST) participates in pepstatin A binding. The cysteines at positions 406 and 441 are disulfide-linked. 2 N-linked (GlcNAc...) asparagine glycosylation sites follow: Asn422 and Asn499. Residues 500 to 520 (SSGSGTTSSSGTSTSTSTRHS) form a disordered region.

It belongs to the peptidase A1 family. Monomer. Post-translationally, the GPI-anchor is attached to the protein in the endoplasmic reticulum and serves to target the protein to the cell surface. There, the glucosamine-inositol phospholipid moiety is cleaved off and the GPI-modified mannoprotein is covalently attached via its lipidless GPI glycan remnant to the 1,6-beta-glucan of the outer cell wall layer.

The protein resides in the cell membrane. It localises to the secreted. Its subcellular location is the cell wall. It carries out the reaction Preferential cleavage at the carboxyl of hydrophobic amino acids, but fails to cleave 15-Leu-|-Tyr-16, 16-Tyr-|-Leu-17 and 24-Phe-|-Phe-25 of insulin B chain. Activates trypsinogen, and degrades keratin.. Its function is as follows. Secreted aspartic peptidases (SAPs) are a group of ten acidic hydrolases considered as key virulence factors. These enzymes supply the fungus with nutrient amino acids as well as are able to degrade the selected host's proteins involved in the immune defense. Moreover, acts toward human hemoglobin though limited proteolysis to generate a variety of antimicrobial hemocidins, enabling to compete with the other microorganisms of the same physiological niche using the microbicidal peptides generated from the host protein. Functionally, plays a key role in defense against host by cleaving histatin-5 (Hst 5), a peptide from human saliva that carries out fungicidal activity. The cleavage rate decreases in an order of SAP2 &gt; SAP9 &gt; SAP3 &gt; SAP7 &gt; SAP4 &gt; SAP1 &gt; SAP8. The first cleavage occurs between residues 'Lys-17' and 'His-18' of Hst 5, giving DSHAKRHHGYKRKFHEK and HHSHRGY peptides. Simultaneously, the DSHAKRHHGYKRK peptide is also formed. Further fragmentation by SAP9 results in FHEK product. This chain is Secreted aspartic protease 9, found in Candida albicans (Yeast).